Consider the following 536-residue polypeptide: Phosphoenolpyruvate carboxykinase (ATP) (536 aa).

Substrate contacts are provided by Arg62, Tyr203, and Lys209. ATP-binding positions include Lys209, His228, and 244 to 252; that span reads GLSGTGKTT. Residues Lys209 and His228 each contribute to the Mn(2+) site. Position 265 (Asp265) interacts with Mn(2+). ATP is bound by residues Glu293, Arg329, 445 to 446, and Thr451; that span reads RI. A substrate-binding site is contributed by Arg329.

It belongs to the phosphoenolpyruvate carboxykinase (ATP) family. Monomer. It depends on Mn(2+) as a cofactor.

The protein resides in the cytoplasm. It carries out the reaction oxaloacetate + ATP = phosphoenolpyruvate + ADP + CO2. The protein operates within carbohydrate biosynthesis; gluconeogenesis. In terms of biological role, involved in the gluconeogenesis. Catalyzes the conversion of oxaloacetate (OAA) to phosphoenolpyruvate (PEP) through direct phosphoryl transfer between the nucleoside triphosphate and OAA. The protein is Phosphoenolpyruvate carboxykinase (ATP) of Glaesserella parasuis serovar 5 (strain SH0165) (Haemophilus parasuis).